A 2492-amino-acid polypeptide reads, in one-letter code: Talin-A (2492 aa).

The region spanning 84–365 (RPQKFKLLDG…GYIEIIMKAR (282 aa)) is the FERM domain. The I/LWEQ domain occupies 2250–2492 (EEDNVLEDLE…NSRKQNYNKN (243 aa)).

It is found in the cytoplasm. The protein resides in the cytoskeleton. The protein localises to the cell cortex. Functionally, actin-binding protein that may be involved in the control of cell motility and chemotaxis. The protein is Talin-A (talA) of Dictyostelium discoideum (Social amoeba).